We begin with the raw amino-acid sequence, 357 residues long: Holliday junction branch migration complex subunit RuvB (357 aa).

The segment at 1 to 20 (MDDHDDSPVSPSFLKSDGEI) is disordered. Residues 1–185 (MDDHDDSPVS…FGFTGHMDFY (185 aa)) are large ATPase domain (RuvB-L). ATP contacts are provided by residues L24, R25, G66, K69, T70, S71, 132–134 (EDF), R175, Y185, and R222. T70 lines the Mg(2+) pocket. A small ATPAse domain (RuvB-S) region spans residues 186-256 (EPGELLRILE…VARAALEVYD (71 aa)). A head domain (RuvB-H) region spans residues 259-357 (TLGLDRLDRA…TSQPTLDLFD (99 aa)). DNA contacts are provided by R314 and R319.

It belongs to the RuvB family. In terms of assembly, homohexamer. Forms an RuvA(8)-RuvB(12)-Holliday junction (HJ) complex. HJ DNA is sandwiched between 2 RuvA tetramers; dsDNA enters through RuvA and exits via RuvB. An RuvB hexamer assembles on each DNA strand where it exits the tetramer. Each RuvB hexamer is contacted by two RuvA subunits (via domain III) on 2 adjacent RuvB subunits; this complex drives branch migration. In the full resolvosome a probable DNA-RuvA(4)-RuvB(12)-RuvC(2) complex forms which resolves the HJ.

The protein resides in the cytoplasm. The enzyme catalyses ATP + H2O = ADP + phosphate + H(+). The RuvA-RuvB-RuvC complex processes Holliday junction (HJ) DNA during genetic recombination and DNA repair, while the RuvA-RuvB complex plays an important role in the rescue of blocked DNA replication forks via replication fork reversal (RFR). RuvA specifically binds to HJ cruciform DNA, conferring on it an open structure. The RuvB hexamer acts as an ATP-dependent pump, pulling dsDNA into and through the RuvAB complex. RuvB forms 2 homohexamers on either side of HJ DNA bound by 1 or 2 RuvA tetramers; 4 subunits per hexamer contact DNA at a time. Coordinated motions by a converter formed by DNA-disengaged RuvB subunits stimulates ATP hydrolysis and nucleotide exchange. Immobilization of the converter enables RuvB to convert the ATP-contained energy into a lever motion, pulling 2 nucleotides of DNA out of the RuvA tetramer per ATP hydrolyzed, thus driving DNA branch migration. The RuvB motors rotate together with the DNA substrate, which together with the progressing nucleotide cycle form the mechanistic basis for DNA recombination by continuous HJ branch migration. Branch migration allows RuvC to scan DNA until it finds its consensus sequence, where it cleaves and resolves cruciform DNA. This chain is Holliday junction branch migration complex subunit RuvB, found in Nocardia farcinica (strain IFM 10152).